The primary structure comprises 453 residues: Tubulin beta-1 chain (453 aa).

GTP is bound by residues Q12, E71, S140, G144, T145, G146, N206, and N228. E71 is a binding site for Mg(2+). The tract at residues 431-453 (TADGVEGYEEEGYENDHPEDDEE) is disordered. Positions 436 to 453 (EGYEEEGYENDHPEDDEE) are enriched in acidic residues.

It belongs to the tubulin family. As to quaternary structure, dimer of alpha and beta chains. A typical microtubule is a hollow water-filled tube with an outer diameter of 25 nm and an inner diameter of 15 nM. Alpha-beta heterodimers associate head-to-tail to form protofilaments running lengthwise along the microtubule wall with the beta-tubulin subunit facing the microtubule plus end conferring a structural polarity. Microtubules usually have 13 protofilaments but different protofilament numbers can be found in some organisms and specialized cells. It depends on Mg(2+) as a cofactor.

It localises to the cytoplasm. The protein resides in the cytoskeleton. Its function is as follows. Tubulin is the major constituent of microtubules, a cylinder consisting of laterally associated linear protofilaments composed of alpha- and beta-tubulin heterodimers. Microtubules grow by the addition of GTP-tubulin dimers to the microtubule end, where a stabilizing cap forms. Below the cap, tubulin dimers are in GDP-bound state, owing to GTPase activity of alpha-tubulin. This Chondrus crispus (Carrageen Irish moss) protein is Tubulin beta-1 chain (TUBB).